A 179-amino-acid polypeptide reads, in one-letter code: ADP-ribosylation factor-like protein 5A (179 aa).

Glycine 2 carries N-myristoyl glycine lipidation. Residues 23 to 30 (GLDNAGKT), 66 to 70 (DIGGQ), 125 to 128 (NKQD), and alanine 159 each bind GTP.

This sequence belongs to the small GTPase superfamily. Arf family.

Functionally, lacks ADP-ribosylation enhancing activity. This is ADP-ribosylation factor-like protein 5A (ARL5A) from Homo sapiens (Human).